Consider the following 276-residue polypeptide: Nickel import system permease protein NikC (276 aa).

5 consecutive transmembrane segments (helical) span residues 10-30 (LIFF…FFVS), 73-93 (LFVT…LGLF), 108-128 (FIDV…ASFF), 186-206 (IIPA…LYIS), and 238-258 (IMLI…NLTG). The ABC transmembrane type-1 domain occupies 69-258 (ARSTLFVTVL…ITILIFNLTG (190 aa)).

Belongs to the binding-protein-dependent transport system permease family. OppBC subfamily. As to quaternary structure, the complex is composed of two ATP-binding proteins (NikD and NikE), two transmembrane proteins (NikB and NikC) and a solute-binding protein (NikA).

It localises to the cell membrane. Functionally, part of the ABC transporter complex NikABCDE (Opp2) involved in nickel import. Probably responsible for the translocation of the substrate across the membrane. This chain is Nickel import system permease protein NikC, found in Staphylococcus aureus (strain Mu50 / ATCC 700699).